Consider the following 264-residue polypeptide: Merozoite surface protein 2 (264 aa).

The N-terminal stretch at 1-20 is a signal peptide; that stretch reads MKVIKTLSIINFFIFVTFNI. N-linked (GlcNAc...) asparagine glycans are attached at residues asparagine 22 and asparagine 36. The interval 44–190 is polymorphic region; it reads ANEGSNTNSV…PQTAENENPA (147 aa). The segment at 46 to 225 is disordered; that stretch reads EGSNTNSVGA…DSQKECTDGN (180 aa). 2 repeat units span residues 60–91 and 92–123. The tract at residues 60–123 is 2 X 32 AA perfects repeats; the sequence is ADTIASGSQR…GESQTTTPTA (64 aa). Low complexity predominate over residues 70–81; that stretch reads STNSASTSTTNN. The segment covering 82–101 has biased composition (polar residues); that stretch reads GESQTTTPTAADTIASGSQR. Positions 102–145 are enriched in low complexity; that stretch reads STNSASTSTTNNGESQTTTPTAADTPTTTESNSPSPPITTTESS. Residue asparagine 152 is glycosylated (N-linked (GlcNAc...) asparagine). Residues 154–166 show a composition bias toward basic and acidic residues; it reads TDGKGEESEKQNE. 2 N-linked (GlcNAc...) asparagine glycosylation sites follow: asparagine 168 and asparagine 213. Cysteine 221 and cysteine 229 are oxidised to a cystine. N-linked (GlcNAc...) asparagine glycans are attached at residues asparagine 237 and asparagine 238. Residue asparagine 238 is the site of GPI-anchor amidated asparagine attachment. Positions 239-264 are cleaved as a propeptide — removed in mature form; that stretch reads SSNIASINKFVVLISATLVLSFAIFI.

The protein resides in the cell membrane. In terms of biological role, may play a role in the merozoite attachment to the erythrocyte. The chain is Merozoite surface protein 2 from Plasmodium falciparum (isolate fid3 / India).